The primary structure comprises 543 residues: ATP-dependent ubiquitin transferase-like protein Cap2 (543 aa).

The interval 1 to 159 (MSSAAAVADV…QNCIVAHANG (159 aa)) is E2-like domain. Cysteine 84 acts as the For E2-like domain in catalysis. The linker domain stretch occupies residues 160 to 305 (CPLWFITDNE…YLAQRNMPNS (146 aa)). Residues 306-543 (KTLAGKNIAV…RDRECPLCNS (238 aa)) form an adenylation plus E1-like domain region. Catalysis depends on for E1-like domain residues cysteine 450 and cysteine 453.

The protein in the C-terminal section; belongs to the HesA/MoeB/ThiF family. As to quaternary structure, forms a Cap2-CdnA complex. A Cap2 dimer is bound on either side by a CdnA monomer.

CD-NTase priming component of a CBASS antiviral system. CBASS (cyclic oligonucleotide-based antiphage signaling system) provides immunity against bacteriophages. The CD-NTase protein (CdnA) synthesizes cyclic nucleotides in response to infection; these serve as specific second messenger signals. The signals activate a diverse range of effectors, leading to bacterial cell death and thus abortive phage infection. A type II-A(GA) CBASS system. Its function is as follows. Acts as a protein transferase, conjugating CdnA, the CD-NTase, to unidentified target(s) in the cell probably via an E1-E2 ubiquitin transferase-like mechanism. This primes CdnA, upon phage infection CdnA activates and makes cyclic nucleotides. Protein conjugation requires ATP. In terms of biological role, the capV-cdnA-cap2-cap3 operon provides about 10(4)-fold protection in strain BWHPSA011 against infection by phage PaMx41. In P.aeruginosa strain PAO1 it confers protection against phages PaMx41 and JBD18 but not JBD67 (JBD18 and JBD67 do not replicate in BWHPSA011 / Pa011). When acb2 in JBD67 is deleted this CBASS operon then protects against JDB67 also. This CBASS system limits prophage induction of lysogenized JBD67 as well as viral lytic replication. This chain is ATP-dependent ubiquitin transferase-like protein Cap2, found in Pseudomonas aeruginosa (strain BWHPSA011 / Pa011).